Consider the following 292-residue polypeptide: MNFSEQQLINWSRPVSTTEDLKCQNAITQITAALRAKFGNRVTIFLQGSYRNNTNVRQNSDVDIVMRYDDAFYPDLQRLSESDKAIYNAQRTYSGYNFDELKADTEEALRNVFTTSVERKNKCIQVNGNSNRITADVIPCFVLKRFSTLQSVEAEGIKFYSDDNKEIISFPEQHYSNGTEKTNQTYRLYKRMVRILKVVNYRLIDDGEIADNLVSSFFIECLVYNVPNNQFISGNYTQTLRNVIVKIYEDMKNNADYTEVNRLFWLFSNRSPRTRQDALGFMQKCWNYLGYQ.

An ATP-binding site is contributed by Gln47. 48-52 contributes to the GTP binding site; it reads GSYRN. Residues Asp61 and Asp63 each contribute to the Mg(2+) site. ATP contacts are provided by residues Asp63, 121–122, and Asp136; that span reads NK. Mg(2+) is bound at residue Asp136. Positions 197 and 216 each coordinate GTP.

The protein belongs to the CD-NTase family. E01 subfamily. The cofactor is Mg(2+).

The enzyme catalyses 2 ATP = 3',3'-c-di-AMP + 2 diphosphate. The catalysed reaction is 2 GTP = 3',3'-c-di-GMP + 2 diphosphate. It catalyses the reaction GTP + ATP = 3',3'-cGAMP + 2 diphosphate. Functionally, cyclic nucleotide synthase (second messenger synthase) of a CBASS antivirus system. CBASS (cyclic oligonucleotide-based antiphage signaling system) provides immunity against bacteriophage. The CD-NTase protein synthesizes cyclic nucleotides in response to infection; these serve as specific second messenger signals. The signals activate a diverse range of effectors, leading to bacterial cell death and thus abortive phage infection. A type I-A(GA) CBASS system. Cyclic dinucleotide synthase that catalyzes the synthesis of 3'3'-cyclic GMP-AMP (cGAMP) from GTP and ATP, and of c-di-AMP and c-di-GMP, that are second messengers for cell signal transduction. The sequence is that of Cyclic dipurine nucleotide synthase from Elizabethkingia meningoseptica (Chryseobacterium meningosepticum).